A 445-amino-acid polypeptide reads, in one-letter code: Phosphoglucosamine mutase (445 aa).

Ser101 functions as the Phosphoserine intermediate in the catalytic mechanism. Mg(2+) is bound by residues Ser101, Asp240, Asp242, and Asp244. Ser101 is modified (phosphoserine).

This sequence belongs to the phosphohexose mutase family. It depends on Mg(2+) as a cofactor. In terms of processing, activated by phosphorylation.

It catalyses the reaction alpha-D-glucosamine 1-phosphate = D-glucosamine 6-phosphate. In terms of biological role, catalyzes the conversion of glucosamine-6-phosphate to glucosamine-1-phosphate. The chain is Phosphoglucosamine mutase from Azotobacter vinelandii (strain DJ / ATCC BAA-1303).